The sequence spans 132 residues: Translation initiation factor 5A (132 aa).

A Hypusine modification is found at Lys-36.

This sequence belongs to the eIF-5A family.

The protein resides in the cytoplasm. In terms of biological role, functions by promoting the formation of the first peptide bond. This is Translation initiation factor 5A (eIF5A) from Pyrobaculum islandicum (strain DSM 4184 / JCM 9189 / GEO3).